The primary structure comprises 187 residues: UPF0200 protein MM_1313 (187 aa).

An ATP-binding site is contributed by 9-16 (GMPASGKS).

This sequence belongs to the UPF0200 family.

The polypeptide is UPF0200 protein MM_1313 (Methanosarcina mazei (strain ATCC BAA-159 / DSM 3647 / Goe1 / Go1 / JCM 11833 / OCM 88) (Methanosarcina frisia)).